The following is a 112-amino-acid chain: Large ribosomal subunit protein uL22 (112 aa).

It belongs to the universal ribosomal protein uL22 family. In terms of assembly, part of the 50S ribosomal subunit.

Functionally, this protein binds specifically to 23S rRNA; its binding is stimulated by other ribosomal proteins, e.g. L4, L17, and L20. It is important during the early stages of 50S assembly. It makes multiple contacts with different domains of the 23S rRNA in the assembled 50S subunit and ribosome. The globular domain of the protein is located near the polypeptide exit tunnel on the outside of the subunit, while an extended beta-hairpin is found that lines the wall of the exit tunnel in the center of the 70S ribosome. The chain is Large ribosomal subunit protein uL22 from Moorella thermoacetica (strain ATCC 39073 / JCM 9320).